A 521-amino-acid polypeptide reads, in one-letter code: uncharacterized protein (521 aa).

The next 10 helical transmembrane spans lie at 103 to 123, 136 to 156, 177 to 197, 200 to 220, 259 to 279, 299 to 319, 327 to 346, 358 to 378, 411 to 431, and 450 to 470; these read NLML…VPMP, FWFF…LWIT, YILF…FTAW, ITFT…GISF, AYAH…VYIV, IMYV…SSWI, YALV…VYVR, FVLV…LITM, CVAS…LHFG, and FKLT…ASYL.

It localises to the membrane. This is an uncharacterized protein from Schizosaccharomyces pombe (strain 972 / ATCC 24843) (Fission yeast).